The primary structure comprises 148 residues: Large ribosomal subunit protein bL9 (148 aa).

This sequence belongs to the bacterial ribosomal protein bL9 family.

Functionally, binds to the 23S rRNA. The chain is Large ribosomal subunit protein bL9 from Bifidobacterium animalis subsp. lactis (strain AD011).